Reading from the N-terminus, the 497-residue chain is Squalene monooxygenase (497 aa).

Residues 29–30 (VV), 49–50 (ER), Arg57, Arg159, Val175, Asp336, and Met349 contribute to the FAD site. The next 2 helical transmembrane spans lie at 434 to 454 (FLSG…TVAL) and 467 to 487 (LGFL…AKVF).

The protein belongs to the squalene monooxygenase family. FAD serves as cofactor.

The protein resides in the microsome membrane. The protein localises to the endoplasmic reticulum membrane. It catalyses the reaction squalene + reduced [NADPH--hemoprotein reductase] + O2 = (S)-2,3-epoxysqualene + oxidized [NADPH--hemoprotein reductase] + H2O + H(+). It functions in the pathway terpene metabolism; lanosterol biosynthesis; lanosterol from farnesyl diphosphate: step 2/3. Catalyzes the stereospecific oxidation of squalene to (S)-2,3-epoxysqualene, and is considered to be a rate-limiting enzyme in steroid biosynthesis. The chain is Squalene monooxygenase (ERG1) from Eremothecium gossypii (strain ATCC 10895 / CBS 109.51 / FGSC 9923 / NRRL Y-1056) (Yeast).